The sequence spans 584 residues: 4-hydroxybenzoate decarboxylase subunit C (584 aa).

It belongs to the UbiD family. As to quaternary structure, component of the decarboxylase complex composed of the subunits B and C (Potential). The subunit D usually found in other organisms seems to be absent.

It carries out the reaction 4-hydroxybenzoate + H(+) = phenol + CO2. The enzyme activity is enhanced by Mg(2+), Fe(2+), Mn(2+) and Ca(2+). No stimulation is observed with Cu(2+) and Zn(2+). Catalyzes the reversible decarboxylation of 4-hydroxybenzoate. In Chlamydia pneumoniae (Chlamydophila pneumoniae), this protein is 4-hydroxybenzoate decarboxylase subunit C.